The sequence spans 61 residues: Small ribosomal subunit protein uS14B (61 aa).

Cys-24, Cys-27, Cys-40, and Cys-43 together coordinate Zn(2+).

The protein belongs to the universal ribosomal protein uS14 family. Zinc-binding uS14 subfamily. In terms of assembly, part of the 30S ribosomal subunit. Contacts proteins S3 and S10. The cofactor is Zn(2+).

In terms of biological role, binds 16S rRNA, required for the assembly of 30S particles and may also be responsible for determining the conformation of the 16S rRNA at the A site. The sequence is that of Small ribosomal subunit protein uS14B from Mycolicibacterium gilvum (strain PYR-GCK) (Mycobacterium gilvum (strain PYR-GCK)).